The primary structure comprises 199 residues: NAD(P)H dehydrogenase (quinone) (199 aa).

Residues 4–190 (MLVLYYSAYG…DDARFQGRRV (187 aa)) enclose the Flavodoxin-like domain. FMN contacts are provided by residues 10–15 (SAYGHM) and 78–80 (TRY). Tyr12 contacts NAD(+). Trp98 is a substrate binding site. FMN-binding positions include 113 to 119 (STATQHG) and His134. The segment at 158–181 (GAPYGMTTTADGDGSRQPSAQELD) is disordered. Residues 163–177 (MTTTADGDGSRQPSA) show a composition bias toward polar residues.

Belongs to the WrbA family. It depends on FMN as a cofactor.

It carries out the reaction a quinone + NADH + H(+) = a quinol + NAD(+). The enzyme catalyses a quinone + NADPH + H(+) = a quinol + NADP(+). This chain is NAD(P)H dehydrogenase (quinone), found in Brucella ovis (strain ATCC 25840 / 63/290 / NCTC 10512).